A 1009-amino-acid chain; its full sequence is 2-oxoglutarate dehydrogenase, mitochondrial (1009 aa).

A mitochondrion-targeting transit peptide spans 1–39 (MLRFIPSSAKARALRRSAVTAYRLNRLTCLSSLQQNRTF). Positions 305, 404, 437, 439, and 669 each coordinate thiamine diphosphate. Residues D404, N437, and I439 each coordinate Mg(2+).

Belongs to the alpha-ketoglutarate dehydrogenase family. It depends on thiamine diphosphate as a cofactor. The cofactor is Mg(2+).

Its subcellular location is the mitochondrion matrix. It catalyses the reaction N(6)-[(R)-lipoyl]-L-lysyl-[protein] + 2-oxoglutarate + H(+) = N(6)-[(R)-S(8)-succinyldihydrolipoyl]-L-lysyl-[protein] + CO2. With respect to regulation, catabolite repressed. In terms of biological role, the 2-oxoglutarate dehydrogenase complex catalyzes the overall conversion of 2-oxoglutarate to succinyl-CoA and CO(2). It contains multiple copies of three enzymatic components: 2-oxoglutarate dehydrogenase (E1), dihydrolipoamide succinyltransferase (E2) and lipoamide dehydrogenase (E3). The sequence is that of 2-oxoglutarate dehydrogenase, mitochondrial (kgd1) from Schizosaccharomyces pombe (strain 972 / ATCC 24843) (Fission yeast).